The following is a 159-amino-acid chain: SsrA-binding protein (159 aa).

A compositionally biased stretch (basic and acidic residues) spans 137-147 (LAERQANRETE). Residues 137 to 159 (LAERQANRETEQAVGRRLKGMHD) are disordered.

The protein belongs to the SmpB family.

It localises to the cytoplasm. Required for rescue of stalled ribosomes mediated by trans-translation. Binds to transfer-messenger RNA (tmRNA), required for stable association of tmRNA with ribosomes. tmRNA and SmpB together mimic tRNA shape, replacing the anticodon stem-loop with SmpB. tmRNA is encoded by the ssrA gene; the 2 termini fold to resemble tRNA(Ala) and it encodes a 'tag peptide', a short internal open reading frame. During trans-translation Ala-aminoacylated tmRNA acts like a tRNA, entering the A-site of stalled ribosomes, displacing the stalled mRNA. The ribosome then switches to translate the ORF on the tmRNA; the nascent peptide is terminated with the 'tag peptide' encoded by the tmRNA and targeted for degradation. The ribosome is freed to recommence translation, which seems to be the essential function of trans-translation. The chain is SsrA-binding protein from Nocardioides sp. (strain ATCC BAA-499 / JS614).